A 131-amino-acid chain; its full sequence is Sec-independent protein translocase protein TatB (131 aa).

The chain crosses the membrane as a helical span at residues 2 to 22; sequence FANIGWGEMLVLVMVGLVVLG. The interval 90 to 131 is disordered; that stretch reads DSLFTGDFDRPTPKKPDAAGSAGPDATEQIGAGPIPFDSDAT. Positions 96 to 106 are enriched in basic and acidic residues; the sequence is DFDRPTPKKPD.

The protein belongs to the TatB family. As to quaternary structure, the Tat system comprises two distinct complexes: a TatABC complex, containing multiple copies of TatA, TatB and TatC subunits, and a separate TatA complex, containing only TatA subunits. Substrates initially bind to the TatABC complex, which probably triggers association of the separate TatA complex to form the active translocon.

The protein resides in the cell membrane. Functionally, part of the twin-arginine translocation (Tat) system that transports large folded proteins containing a characteristic twin-arginine motif in their signal peptide across membranes. Together with TatC, TatB is part of a receptor directly interacting with Tat signal peptides. TatB may form an oligomeric binding site that transiently accommodates folded Tat precursor proteins before their translocation. The chain is Sec-independent protein translocase protein TatB from Mycobacterium bovis (strain ATCC BAA-935 / AF2122/97).